Here is a 359-residue protein sequence, read N- to C-terminus: Peptide chain release factor 1 (359 aa).

Gln236 carries the post-translational modification N5-methylglutamine.

The protein belongs to the prokaryotic/mitochondrial release factor family. Methylated by PrmC. Methylation increases the termination efficiency of RF1.

It localises to the cytoplasm. Peptide chain release factor 1 directs the termination of translation in response to the peptide chain termination codons UAG and UAA. The protein is Peptide chain release factor 1 of Lacticaseibacillus casei (strain BL23) (Lactobacillus casei).